The sequence spans 1789 residues: Protein TIC 214 (1789 aa).

6 consecutive transmembrane segments (helical) span residues 19–39, 68–88, 91–111, 133–153, 176–196, and 227–247; these read IINSVVVVGLYYGFLTTFSIG, FIAGQLMMFISIYYAPLHLAL, PHTITVLALPYLLFHFFWNNH, VFLNNLIFQLFNHFILPSSML, VGWLIGHILFMKWVGLVLVWI, and IFSILLFITCVYYLGRIPSPI.

The protein belongs to the TIC214 family. Part of the Tic complex.

The protein resides in the plastid. It localises to the chloroplast inner membrane. In terms of biological role, involved in protein precursor import into chloroplasts. May be part of an intermediate translocation complex acting as a protein-conducting channel at the inner envelope. The sequence is that of Protein TIC 214 from Capsella bursa-pastoris (Shepherd's purse).